Reading from the N-terminus, the 231-residue chain is MARARSDSPLLFEIVEKPDFSFETKAMADGLWPVAGMDEAGRGPLAGPVVAAAVVLDPANIPEGLDDSKRLSHFQREALFLRILGSAQAVSMASISAEGIDGSNILKASLEAMRRALVGLSVRPKLALADGRDVPPGLPCDGRALIKGDQRSQSIAAASIVAKVMRDRMMCGCGSHHDRYGFEVHMGYATARHRTAIETHGPVARLHRVSFAPFRLGGTEVVEEESLAGLD.

An RNase H type-2 domain is found at 32-223; the sequence is WPVAGMDEAG…FRLGGTEVVE (192 aa). Residues D38, E39, and D130 each contribute to the a divalent metal cation site.

The protein belongs to the RNase HII family. It depends on Mn(2+) as a cofactor. Mg(2+) serves as cofactor.

It is found in the cytoplasm. The catalysed reaction is Endonucleolytic cleavage to 5'-phosphomonoester.. Functionally, endonuclease that specifically degrades the RNA of RNA-DNA hybrids. The sequence is that of Ribonuclease HII from Mesorhizobium japonicum (strain LMG 29417 / CECT 9101 / MAFF 303099) (Mesorhizobium loti (strain MAFF 303099)).